A 1553-amino-acid polypeptide reads, in one-letter code: Mediator of RNA polymerase II transcription subunit 14 (1553 aa).

2 consecutive short sequence motifs (LXXLL motif) follow at residues Leu55–Leu59 and Leu472–Leu476. Phosphoserine is present on Ser615. Disordered stretches follow at residues Phe699–Gly723, Ala1006–Pro1199, and Gly1513–Gln1553. The residue at position 1015 (Ser1015) is a Phosphoserine. Low complexity-rich tracts occupy residues Gly1024–Pro1039 and Pro1065–Ala1080. The span at Gly1081–Gly1090 shows a compositional bias: gly residues. Pro residues predominate over residues Pro1099–Ser1108. Over residues Gly1131–Trp1155 the composition is skewed to polar residues. The segment covering Pro1159–Gly1169 has biased composition (pro residues). Over residues Thr1177–Arg1193 the composition is skewed to gly residues. Residues Gly1515 to Gln1534 are compositionally biased toward low complexity.

It belongs to the Mediator complex subunit 14 family. Component of the Mediator complex, which may include CDK8, MED4, MED6, MED11, MED14, MED17, MED18, MED20, MED21, MED22, MED27, MED28, MED30 and MED31.

The protein resides in the nucleus. Functionally, component of the Mediator complex, a coactivator involved in the regulated transcription of nearly all RNA polymerase II-dependent genes. Mediator functions as a bridge to convey information from gene-specific regulatory proteins to the basal RNA polymerase II transcription machinery. Mediator is recruited to promoters by direct interactions with regulatory proteins and serves as a scaffold for the assembly of a functional pre-initiation complex with RNA polymerase II and the general transcription factors. Required for activated transcription of the MtnA, MtnB and MtnD genes. The polypeptide is Mediator of RNA polymerase II transcription subunit 14 (MED14) (Drosophila melanogaster (Fruit fly)).